Consider the following 29-residue polypeptide: Kalata-B4 (29 aa).

Positions 1 to 29 form a cross-link, cyclopeptide (Gly-Asp); sequence GLPVCGETCVGGTCNTPGCTCSWPVCTRD. 3 cysteine pairs are disulfide-bonded: C5/C19, C9/C21, and C14/C26.

In terms of processing, this is a cyclic peptide.

In terms of biological role, probably participates in a plant defense mechanism. This Oldenlandia affinis protein is Kalata-B4.